Here is a 484-residue protein sequence, read N- to C-terminus: Glycogen synthase 2 (484 aa).

An ADP-alpha-D-glucose-binding site is contributed by Arg15.

It belongs to the glycosyltransferase 1 family. Bacterial/plant glycogen synthase subfamily.

It carries out the reaction [(1-&gt;4)-alpha-D-glucosyl](n) + ADP-alpha-D-glucose = [(1-&gt;4)-alpha-D-glucosyl](n+1) + ADP + H(+). It functions in the pathway glycan biosynthesis; glycogen biosynthesis. Synthesizes alpha-1,4-glucan chains using ADP-glucose. The chain is Glycogen synthase 2 from Geobacter sulfurreducens (strain ATCC 51573 / DSM 12127 / PCA).